We begin with the raw amino-acid sequence, 142 residues long: MIRFILLQNRQGKTRLAKYYVPLEESEKHKVEYEVHRLVVNRDAKFTNFVEFRTHKVIYRRYAGLFFSVCVDITDNELAYLESIHLFVEILDHFFSNVCELDLVFNFHKVYLILDEFILAGELQETSKRAIIERMSELEKLQ.

It belongs to the adaptor complexes small subunit family. In terms of assembly, adaptor protein complex 2 (AP-2) is a heterotetramer composed of two large adaptins (alpha-type and beta-type subunits), a medium adaptin (mu-type subunit) and a small adaptin (sigma-type subunit).

It is found in the cell membrane. Its subcellular location is the membrane. The protein localises to the coated pit. Functionally, subunit of the adaptor protein complex 2 (AP-2). Adaptor protein complexes function in protein transport via transport vesicles in different membrane traffic pathways. Adaptor protein complexes are vesicle coat components and appear to be involved in cargo selection and vesicle formation. AP-2 is involved in clathrin-dependent endocytosis in which cargo proteins are incorporated into vesicles surrounded by clathrin (clathrin-coated vesicles, CCVs) which are destined for fusion with the early endosome. The complex binds polyphosphoinositides. This Arabidopsis thaliana (Mouse-ear cress) protein is AP-2 complex subunit sigma (AP17).